A 458-amino-acid polypeptide reads, in one-letter code: 5'-adenylylsulfate reductase 3, chloroplastic (458 aa).

The interval 1 to 24 (MALAINVSSSSSSAISSSSFPSSD) is disordered. Residues 1 to 69 (MALAINVSSS…VQSITKESIV (69 aa)) constitute a chloroplast transit peptide. Positions 8-23 (SSSSSSAISSSSFPSS) are enriched in low complexity. The interval 70–319 (ASEVTEKLDV…KAKECGLHKG (250 aa)) is reductase domain. A Thioredoxin domain is found at 337-458 (ASVADIFNSE…SLTSFLNLVR (122 aa)). Catalysis depends on nucleophile residues cysteine 378 and cysteine 381. Cysteine 378 and cysteine 381 form a disulfide bridge.

This sequence belongs to the APS reductase family. It depends on [4Fe-4S] cluster as a cofactor. Leaves, roots and stem.

The protein localises to the plastid. It localises to the chloroplast. It catalyses the reaction glutathione disulfide + sulfite + AMP + 2 H(+) = adenosine 5'-phosphosulfate + 2 glutathione. With respect to regulation, stimulated by sodium sulfate &gt; ammonium sulfate. Reduces sulfate for Cys biosynthesis. Substrate preference is adenosine-5'-phosphosulfate (APS) &gt;&gt; 3'-phosphoadenosine-5'-phosphosulfate (PAPS). Uses glutathione or DTT as source of protons. The sequence is that of 5'-adenylylsulfate reductase 3, chloroplastic (APR3) from Arabidopsis thaliana (Mouse-ear cress).